A 96-amino-acid polypeptide reads, in one-letter code: Small ribosomal subunit protein bS18 (96 aa).

The tract at residues 1 to 20 (MSHGGKRRSGDGGSEGSSYS) is disordered.

This sequence belongs to the bacterial ribosomal protein bS18 family. As to quaternary structure, part of the 30S ribosomal subunit. Forms a tight heterodimer with protein bS6.

Its function is as follows. Binds as a heterodimer with protein bS6 to the central domain of the 16S rRNA, where it helps stabilize the platform of the 30S subunit. The polypeptide is Small ribosomal subunit protein bS18 (Anaplasma phagocytophilum (strain HZ)).